Consider the following 365-residue polypeptide: Glutamate 5-kinase 1 (365 aa).

Residue Lys9 coordinates ATP. Substrate-binding residues include Ser49, Asp136, and Asn148. ATP-binding positions include 168 to 169 (TD) and 210 to 216 (TGGMKSK). The PUA domain occupies 276 to 353 (SGKITVDEGA…DEFHHEEGIE (78 aa)).

The protein belongs to the glutamate 5-kinase family.

The protein resides in the cytoplasm. It carries out the reaction L-glutamate + ATP = L-glutamyl 5-phosphate + ADP. Its pathway is amino-acid biosynthesis; L-proline biosynthesis; L-glutamate 5-semialdehyde from L-glutamate: step 1/2. Functionally, catalyzes the transfer of a phosphate group to glutamate to form L-glutamate 5-phosphate. The sequence is that of Glutamate 5-kinase 1 from Bacillus licheniformis (strain ATCC 14580 / DSM 13 / JCM 2505 / CCUG 7422 / NBRC 12200 / NCIMB 9375 / NCTC 10341 / NRRL NRS-1264 / Gibson 46).